A 249-amino-acid polypeptide reads, in one-letter code: Protein LicA homolog (249 aa).

This sequence belongs to the peptidase S49 family.

The polypeptide is Protein LicA homolog (licA) (Metamycoplasma hominis (strain ATCC 23114 / DSM 25592 / NBRC 14850 / NCTC 10111 / PG21) (Mycoplasma hominis)).